We begin with the raw amino-acid sequence, 700 residues long: Peroxisomal acyl-coenzyme A oxidase 1 (700 aa).

FAD-binding positions include threonine 147, glycine 186, and 412 to 417 (CGGHGY). The active-site Proton acceptor is the glutamate 437. The Microbody targeting signal motif lies at 698 to 700 (SKL).

The protein belongs to the acyl-CoA oxidase family. FAD serves as cofactor.

It localises to the peroxisome. The catalysed reaction is a 2,3-saturated acyl-CoA + O2 = a (2E)-enoyl-CoA + H2O2. Functionally, catalyzes the desaturation of acyl-CoAs to 2-trans-enoyl-CoAs. First enzyme of the fatty acid beta-oxidation pathway. This chain is Peroxisomal acyl-coenzyme A oxidase 1 (acox1), found in Dictyostelium discoideum (Social amoeba).